The following is a 611-amino-acid chain: Leukotriene A-4 hydrolase (611 aa).

Residue K73 is modified to N6-acetyllysine. Residues 135–137 (QCQ) and 267–272 (PYGGME) contribute to the a peptide site. H296 provides a ligand contact to Zn(2+). E297 (proton acceptor) is an active-site residue. Zn(2+) is bound by residues H300 and E319. K337 is modified (N6-acetyllysine). Catalysis depends on Y384, which acts as the Proton donor. K414 carries the N6-acetyllysine modification. At S416 the chain carries Phosphoserine. 564 to 566 (RMK) is a binding site for a peptide. K573 bears the N6-acetyllysine mark.

It belongs to the peptidase M1 family. As to quaternary structure, monomer. Zn(2+) serves as cofactor. Phosphorylation at Ser-416 inhibits leukotriene-A4 hydrolase activity.

The protein resides in the cytoplasm. It catalyses the reaction leukotriene A4 + H2O = leukotriene B4. The enzyme catalyses (5S,6S)-epoxy-(18R)-hydroxy-(7E,9E,11Z,14Z,16E)-eicosapentaenoate + H2O = resolvin E1. The catalysed reaction is (5S,6S)-epoxy-(18S)-hydroxy-(7E,9E,11Z,14Z,16E)-eicosapentaenoate + H2O = 18S-resolvin E1. It carries out the reaction Release of the N-terminal residue from a tripeptide.. It functions in the pathway lipid metabolism; leukotriene B4 biosynthesis. With respect to regulation, inhibited by bestatin. Inhibited by captopril. The epoxide hydrolase activity is restrained by suicide inactivation that involves binding of LTA4 to Tyr-379. 4-(4-benzylphenyl)thiazol-2-amine (ARM1) selectively inhibits the epoxide hydrolase activity. Bifunctional zinc metalloenzyme that comprises both epoxide hydrolase (EH) and aminopeptidase activities. Acts as an epoxide hydrolase to catalyze the conversion of LTA4 to the pro-inflammatory mediator leukotriene B4 (LTB4). Also has aminopeptidase activity, with high affinity for N-terminal arginines of various synthetic tripeptides. In addition to its pro-inflammatory EH activity, may also counteract inflammation by its aminopeptidase activity, which inactivates by cleavage another neutrophil attractant, the tripeptide Pro-Gly-Pro (PGP), a bioactive fragment of collagen generated by the action of matrix metalloproteinase-9 (MMP9) and prolylendopeptidase (PREPL). Involved also in the biosynthesis of resolvin E1 and 18S-resolvin E1 from eicosapentaenoic acid, two lipid mediators that show potent anti-inflammatory and pro-resolving actions. The sequence is that of Leukotriene A-4 hydrolase (Lta4h) from Rattus norvegicus (Rat).